Reading from the N-terminus, the 1256-residue chain is Protein flightless-1 (1256 aa).

15 LRR repeats span residues 4–28, 29–51, 52–74, 75–99, 100–122, 124–145, 147–169, 171–192, 218–241, 243–264, 265–287, 289–312, 313–335, 336–358, and 360–381; these read LPFV…MRQM, SRVQ…LGHL, QKLE…LTEL, SCLR…LFHL, EELT…LERA, NLIV…LFIH, TDLL…TRRL, NLKT…QLPS, LANL…VYNV, TLVR…VELW, QRLE…LCKL, KLRR…IGKL, GALE…LCRC, GALK…IHLL, and GLDQ…PSEA. The segment at 405 to 476 is disordered; sequence AAVPPSMPSS…ESLKPKRWDE (72 aa). Positions 431-476 are enriched in basic and acidic residues; the sequence is PRSEGDQDAAKVLKGMKDVAKDKDNEAGAVPEDGKPESLKPKRWDE. Gelsolin-like repeat units lie at residues 512–589, 633–703, 749–822, and 1168–1242; these read IEEV…EQFL, EPVA…AEFW, VELP…MQIF, and EKCA…SRRF.

Belongs to the villin/gelsolin family. Found in ovaries, larval fat bodies, brain and adult thorax.

Functionally, may play a key role in embryonic cellularization by interacting with both the cytoskeleton and other cellular components. Alternatively, it may play a structural role in indirect flight muscle. Vital for embryonic development. The chain is Protein flightless-1 (fliI) from Drosophila melanogaster (Fruit fly).